Here is a 90-residue protein sequence, read N- to C-terminus: Auxin-responsive protein SAUR22 (90 aa).

The protein belongs to the ARG7 family.

It is found in the cell membrane. Its function is as follows. Functions as a positive effector of cell expansion through modulation of auxin transport. In Arabidopsis thaliana (Mouse-ear cress), this protein is Auxin-responsive protein SAUR22.